Reading from the N-terminus, the 98-residue chain is MMCGAPSATQPATAEIQAIADKVKSQLEEKENKTFPVFKAVEFKSQVVAGRNLFIKVQVDDDDFVHLRVFESLPHENKPLTLSSYQTNKSRHDELTYF.

Residue methionine 1 is modified to N-acetylmethionine. Positions 46–50 (QVVAG) match the Secondary area of contact motif.

The protein belongs to the cystatin family.

The protein resides in the cytoplasm. Its function is as follows. This is an intracellular thiol proteinase inhibitor. The protein is Cystatin-B (CSTB) of Sus scrofa (Pig).